A 445-amino-acid chain; its full sequence is Phosphatidate cytidylyltransferase 2 (445 aa).

Positions 1 to 39 (MTELRQRVAREPEAPPEDKESESEAKADGETASDSESRV) are enriched in basic and acidic residues. Positions 1–52 (MTELRQRVAREPEAPPEDKESESEAKADGETASDSESRVEAVTQPPSADDTP) are disordered. Ser21 carries the post-translational modification Phosphoserine. Phosphothreonine is present on Thr31. Phosphoserine occurs at positions 33, 35, and 37. Position 51 is a phosphothreonine (Thr51). Transmembrane regions (helical) follow at residues 79-99 (MIAF…MIVM), 132-152 (FLLC…FFTL), 166-186 (HRFI…LSLV), 213-233 (LVIH…SCVI), 262-282 (GFIG…YVMS), and 340-360 (IALS…ASGF).

Belongs to the CDS family. As to quaternary structure, homodimer.

It localises to the endoplasmic reticulum membrane. It catalyses the reaction a 1,2-diacyl-sn-glycero-3-phosphate + CTP + H(+) = a CDP-1,2-diacyl-sn-glycerol + diphosphate. It carries out the reaction 1-octadecanoyl-2-(5Z,8Z,11Z,14Z-eicosatetraenoyl)-sn-glycero-3-phosphate + CTP + H(+) = 1-octadecanoyl-2-(5Z,8Z,11Z,14Z-eicosatetraenoyl)-sn-glycero-3-cytidine-5'-diphosphate + diphosphate. The enzyme catalyses 1-octadecanoyl-2-(9Z,12Z-octadecadienoyl)-sn-glycero-3-phosphate + CTP + H(+) = 1-octadecanoyl-2-(9Z,12Z-octadecadienoyl)-sn-glycero-3-cytidine-5'-diphosphate + diphosphate. The catalysed reaction is 1-hexadecanoyl-2-(5Z,8Z,11Z,14Z-eicosatetraenoyl)-sn-glycero-3-phosphate + CTP + H(+) = 1-hexadecanoyl-2-(5Z,8Z,11Z,14Z-eicosatetraenoyl)-sn-glycero-3-cytidine-5'-diphosphate + diphosphate. It catalyses the reaction 1,2-di-(5Z,8Z,11Z,14Z)-eicosatetraenoyl-sn-glycero-3-phosphate + CTP + H(+) = 1,2-di-(5Z,8Z,11Z,14Z-eicosatetraenoyl)-sn-glycero-3-cytidine-5'-diphosphate + diphosphate. It carries out the reaction 1-octadecanoyl-2-(9Z-octadecenoyl)-sn-glycero-3-phosphate + CTP + H(+) = 1-octadecanoyl-2-(9Z-octadecenoyl)-sn-glycero-3-cytidine-5'-diphosphate + diphosphate. The enzyme catalyses 1-octadecanoyl-2-(4Z,7Z,10Z,13Z,16Z,19Z-docosahexaenoyl)-sn-glycero-3-phosphate + CTP + H(+) = 1-octadecanoyl-2-(4Z,7Z,10Z,13Z,16Z,19Z-docosahexaenoyl)-sn-glycero-3-cytidine-5'-diphosphate + diphosphate. The catalysed reaction is 1,2-di-(9Z,12Z-octadecadienoyl)-sn-glycero-3-phosphate + CTP + H(+) = 1,2-di-(9Z,12Z-octadecadienoyl)-sn-glycero-3-cytidine-5'-diphosphate + diphosphate. It catalyses the reaction 1,2-di-(9Z-octadecenoyl)-sn-glycero-3-phosphate + CTP + H(+) = 1,2-di-(9Z-octadecenoyl)-sn-glycero-3-cytidine-5'-diphosphate + diphosphate. The protein operates within phospholipid metabolism; CDP-diacylglycerol biosynthesis; CDP-diacylglycerol from sn-glycerol 3-phosphate: step 3/3. Catalyzes the conversion of phosphatidic acid (PA) to CDP-diacylglycerol (CDP-DAG), an essential intermediate in the synthesis of phosphatidylglycerol, cardiolipin and phosphatidylinositol. Exhibits specificity for the nature of the acyl chains at the sn-1 and sn-2 positions in the substrate, PA and the preferred acyl chain composition is 1-stearoyl-2-arachidonoyl-sn-phosphatidic acid. Plays an important role in regulating the growth and maturation of lipid droplets which are storage organelles at the center of lipid and energy homeostasis. The chain is Phosphatidate cytidylyltransferase 2 (CDS2) from Bos taurus (Bovine).